The sequence spans 97 residues: Large ribosomal subunit protein eL21 (97 aa).

The protein belongs to the eukaryotic ribosomal protein eL21 family.

In Archaeoglobus fulgidus (strain ATCC 49558 / DSM 4304 / JCM 9628 / NBRC 100126 / VC-16), this protein is Large ribosomal subunit protein eL21 (rpl21e).